Consider the following 279-residue polypeptide: MSIISPQDVKRLREETNAGFGDCKKALSAASGDFELAKKKLREMGIASAEKRLDRDAKEGRVFSYSNNIHAGLLLVSCETDFVALNHNFVNLGNSLIKELVESGRSFPTASQELELKNLAATIKENIQVKKIFITEIQSNEFVKIYLHGEQSKIGVLVKLKVDDFSKTEDKMFQNFAMDLALHVAAFAPIYLGNDDVCPNYIKEQEEIFAKQLEFSGKSESILKGIVAGKIKKHLAEISLLEQSFVKNDKVTVREMLEEISKAISSKIEIVEFKYLRIG.

The involved in Mg(2+) ion dislocation from EF-Tu stretch occupies residues 80-83 (TDFV).

It belongs to the EF-Ts family.

It is found in the cytoplasm. In terms of biological role, associates with the EF-Tu.GDP complex and induces the exchange of GDP to GTP. It remains bound to the aminoacyl-tRNA.EF-Tu.GTP complex up to the GTP hydrolysis stage on the ribosome. The sequence is that of Elongation factor Ts from Borrelia garinii subsp. bavariensis (strain ATCC BAA-2496 / DSM 23469 / PBi) (Borreliella bavariensis).